A 483-amino-acid polypeptide reads, in one-letter code: Membrane-bound lytic murein transglycosylase F (483 aa).

Positions 1 to 18 (MKGLIARFIAGFALLLWA) are cleaved as a signal peptide. The interval 19 to 267 (WDMVFPWQQL…RIEEKYFNHL (249 aa)) is non-LT domain. Residues 269–483 (HFDYVDIQSY…SKESDSTLKE (215 aa)) form an LT domain region. Glutamate 312 is an active-site residue. Residues 458–483 (QQIQNNEEQPSVPQEISKESDSTLKE) are disordered. A compositionally biased stretch (basic and acidic residues) spans 473-483 (ISKESDSTLKE).

This sequence in the N-terminal section; belongs to the bacterial solute-binding protein 3 family. It in the C-terminal section; belongs to the transglycosylase Slt family.

It is found in the cell outer membrane. The enzyme catalyses Exolytic cleavage of the (1-&gt;4)-beta-glycosidic linkage between N-acetylmuramic acid (MurNAc) and N-acetylglucosamine (GlcNAc) residues in peptidoglycan, from either the reducing or the non-reducing ends of the peptidoglycan chains, with concomitant formation of a 1,6-anhydrobond in the MurNAc residue.. Its function is as follows. Murein-degrading enzyme that degrades murein glycan strands and insoluble, high-molecular weight murein sacculi, with the concomitant formation of a 1,6-anhydromuramoyl product. Lytic transglycosylases (LTs) play an integral role in the metabolism of the peptidoglycan (PG) sacculus. Their lytic action creates space within the PG sacculus to allow for its expansion as well as for the insertion of various structures such as secretion systems and flagella. The protein is Membrane-bound lytic murein transglycosylase F of Actinobacillus pleuropneumoniae serotype 3 (strain JL03).